Reading from the N-terminus, the 257-residue chain is Glutamate racemase (257 aa).

Substrate-binding positions include 12–13 and 44–45; these read DS and YG. The active-site Proton donor/acceptor is C75. Residue 76 to 77 participates in substrate binding; the sequence is NT. C185 serves as the catalytic Proton donor/acceptor. Substrate is bound at residue 186-187; it reads TH.

This sequence belongs to the aspartate/glutamate racemases family.

The enzyme catalyses L-glutamate = D-glutamate. Its pathway is cell wall biogenesis; peptidoglycan biosynthesis. Functionally, provides the (R)-glutamate required for cell wall biosynthesis. This Clostridium botulinum (strain Kyoto / Type A2) protein is Glutamate racemase.